Consider the following 703-residue polypeptide: Glycogen [starch] synthase, liver (703 aa).

Serine 8 carries the post-translational modification Phosphoserine; by PKA. Serine 11 is subject to Phosphoserine. Lysine 40 is a binding site for UDP. 2 residues coordinate UDP-alpha-D-glucose: histidine 205 and arginine 211. 5 residues coordinate alpha-D-glucose 6-phosphate: histidine 291, glutamate 292, glutamine 294, histidine 297, and lysine 301. Arginine 331 provides a ligand contact to UDP. A UDP-alpha-D-glucose-binding site is contributed by arginine 331. An alpha-D-glucose 6-phosphate-binding site is contributed by histidine 501. Positions 510, 512, and 513 each coordinate UDP-alpha-D-glucose. A UDP-binding site is contributed by threonine 515. Alpha-D-glucose 6-phosphate contacts are provided by arginine 582 and arginine 586. The residue at position 627 (serine 627) is a Phosphoserine. The interval 628–703 is disordered; that stretch reads PPTTEGFKYP…KKKLHGEYKN (76 aa). Phosphoserine; by GSK3-alpha and GSK3-beta occurs at positions 641, 645, 649, and 653. Residues 647–657 are compositionally biased toward low complexity; sequence SGSQASSPQSS. Serine 657 carries the post-translational modification Phosphoserine; by CK2. Residues 658–674 show a composition bias toward acidic residues; it reads DVEDEVEDERYDEEEEA. Serine 683 is subject to Phosphoserine.

Belongs to the glycosyltransferase 3 family. In terms of assembly, part of the glycogen synthase (GS)-glycogenin complex, a heterooctamer composed of a tetramer of GS and 2 dimers of glycogenin, where each GS protomer binds to one glycogenin subunit (via glycogenin C-terminus); the GS tetramer may dissociate from glycogenin dimers to continue glycogen polymerization on its own. May also form a heterooctamer complex with GYG1 (via GYG1 C-terminus). In terms of processing, primed phosphorylation at Ser-657 (site 5) by CSNK2A1 and CSNK2A2 is required for inhibitory phosphorylation at Ser-641 (site 3a), Ser-645 (site 3b), Ser-649 (site 3c) and Ser-653 (site 4) by GSK3A an GSK3B. Dephosphorylation at Ser-641 and Ser-645 by PP1 activates the enzyme. Phosphorylation at Ser-8 is not required for interaction with GYG1. Interaction with GYG1 does not regulate the phosphorylation at Ser-8 and Ser-641. As to expression, specifically expressed in liver (at protein level).

The catalysed reaction is [(1-&gt;4)-alpha-D-glucosyl](n) + UDP-alpha-D-glucose = [(1-&gt;4)-alpha-D-glucosyl](n+1) + UDP + H(+). The protein operates within glycan biosynthesis; glycogen biosynthesis. With respect to regulation, allosteric activation by glucose-6-phosphate. Phosphorylation reduces the activity towards UDP-glucose. When in the non-phosphorylated state, glycogen synthase does not require glucose-6-phosphate as an allosteric activator; when phosphorylated it does. Its function is as follows. Glycogen synthase participates in the glycogen biosynthetic process along with glycogenin and glycogen branching enzyme. Extends the primer composed of a few glucose units formed by glycogenin by adding new glucose units to it. In this context, glycogen synthase transfers the glycosyl residue from UDP-Glc to the non-reducing end of alpha-1,4-glucan. The polypeptide is Glycogen [starch] synthase, liver (Homo sapiens (Human)).